The primary structure comprises 362 residues: S-adenosylmethionine:tRNA ribosyltransferase-isomerase (362 aa).

Belongs to the QueA family. As to quaternary structure, monomer.

The protein resides in the cytoplasm. It catalyses the reaction 7-aminomethyl-7-carbaguanosine(34) in tRNA + S-adenosyl-L-methionine = epoxyqueuosine(34) in tRNA + adenine + L-methionine + 2 H(+). Its pathway is tRNA modification; tRNA-queuosine biosynthesis. Its function is as follows. Transfers and isomerizes the ribose moiety from AdoMet to the 7-aminomethyl group of 7-deazaguanine (preQ1-tRNA) to give epoxyqueuosine (oQ-tRNA). This Yersinia enterocolitica serotype O:8 / biotype 1B (strain NCTC 13174 / 8081) protein is S-adenosylmethionine:tRNA ribosyltransferase-isomerase.